Here is a 170-residue protein sequence, read N- to C-terminus: MDQSVPSENQPETGEGRTIIDIAGIMKMIPHRYPFLLVDRVIDIVRGERGIGIKNVTASESHFAGHFPNHPVMPGVLIIESMAQTAAVLVVDALGTDAEGRVVYFMSIEGAKFRRPVVPGDQLRIECERLQHRGNVWKFRGTARVDGQIVAEASFAAMILRPSPAQQAEA.

Residue His-66 is part of the active site.

Belongs to the thioester dehydratase family. FabZ subfamily.

Its subcellular location is the cytoplasm. The enzyme catalyses a (3R)-hydroxyacyl-[ACP] = a (2E)-enoyl-[ACP] + H2O. Functionally, involved in unsaturated fatty acids biosynthesis. Catalyzes the dehydration of short chain beta-hydroxyacyl-ACPs and long chain saturated and unsaturated beta-hydroxyacyl-ACPs. The polypeptide is 3-hydroxyacyl-[acyl-carrier-protein] dehydratase FabZ (Granulibacter bethesdensis (strain ATCC BAA-1260 / CGDNIH1)).